The primary structure comprises 289 residues: Phosphatidylserine decarboxylase proenzyme (289 aa).

Active-site charge relay system; for autoendoproteolytic cleavage activity residues include aspartate 92, histidine 149, and serine 254. The active-site Schiff-base intermediate with substrate; via pyruvic acid; for decarboxylase activity is the serine 254. Pyruvic acid (Ser); by autocatalysis is present on serine 254.

It belongs to the phosphatidylserine decarboxylase family. PSD-B subfamily. Prokaryotic type I sub-subfamily. As to quaternary structure, heterodimer of a large membrane-associated beta subunit and a small pyruvoyl-containing alpha subunit. The cofactor is pyruvate. Is synthesized initially as an inactive proenzyme. Formation of the active enzyme involves a self-maturation process in which the active site pyruvoyl group is generated from an internal serine residue via an autocatalytic post-translational modification. Two non-identical subunits are generated from the proenzyme in this reaction, and the pyruvate is formed at the N-terminus of the alpha chain, which is derived from the carboxyl end of the proenzyme. The autoendoproteolytic cleavage occurs by a canonical serine protease mechanism, in which the side chain hydroxyl group of the serine supplies its oxygen atom to form the C-terminus of the beta chain, while the remainder of the serine residue undergoes an oxidative deamination to produce ammonia and the pyruvoyl prosthetic group on the alpha chain. During this reaction, the Ser that is part of the protease active site of the proenzyme becomes the pyruvoyl prosthetic group, which constitutes an essential element of the active site of the mature decarboxylase.

The protein localises to the cell membrane. It carries out the reaction a 1,2-diacyl-sn-glycero-3-phospho-L-serine + H(+) = a 1,2-diacyl-sn-glycero-3-phosphoethanolamine + CO2. Its pathway is phospholipid metabolism; phosphatidylethanolamine biosynthesis; phosphatidylethanolamine from CDP-diacylglycerol: step 2/2. Catalyzes the formation of phosphatidylethanolamine (PtdEtn) from phosphatidylserine (PtdSer). This is Phosphatidylserine decarboxylase proenzyme from Pseudomonas aeruginosa (strain ATCC 15692 / DSM 22644 / CIP 104116 / JCM 14847 / LMG 12228 / 1C / PRS 101 / PAO1).